A 149-amino-acid polypeptide reads, in one-letter code: Putative pre-16S rRNA nuclease (149 aa).

It belongs to the YqgF nuclease family.

The protein resides in the cytoplasm. In terms of biological role, could be a nuclease involved in processing of the 5'-end of pre-16S rRNA. The sequence is that of Putative pre-16S rRNA nuclease from Burkholderia vietnamiensis (strain G4 / LMG 22486) (Burkholderia cepacia (strain R1808)).